The following is a 377-amino-acid chain: Actin depolymerising venom protein gelsolin 1 (377 aa).

A signal peptide spans 1-26 (MFRQMKLGSLATKLLLACFLVTCTSG). Gelsolin-like repeat units follow at residues 50–133 (FVPV…SEQF), 174–243 (IRVR…SSTS), and 298–368 (EKPL…PTAF).

In terms of tissue distribution, expressed by the venom gland (posterior main gland) (at protein level).

It is found in the secreted. This Platymeris rhadamanthus (Red spot assassin bug) protein is Actin depolymerising venom protein gelsolin 1.